Reading from the N-terminus, the 58-residue chain is Succinate dehydrogenase subunit 8B, mitochondrial (58 aa).

As to quaternary structure, component of complex II composed of eight subunits in plants: four classical SDH subunits SDH1, SDH2, SDH3 and SDH4 (a flavoprotein (FP), an iron-sulfur protein (IP), and a cytochrome b composed of a large and a small subunit.), as well as four subunits unknown in mitochondria from bacteria and heterotrophic eukaryotes.

It localises to the mitochondrion inner membrane. It participates in carbohydrate metabolism; tricarboxylic acid cycle. The chain is Succinate dehydrogenase subunit 8B, mitochondrial from Oryza sativa subsp. japonica (Rice).